The sequence spans 544 residues: Chaperonin GroEL 1 (544 aa).

Residues 30-33, lysine 51, 87-91, glycine 415, and aspartate 494 contribute to the ATP site; these read TLGP and DGTTT.

It belongs to the chaperonin (HSP60) family. In terms of assembly, forms a cylinder of 14 subunits composed of two heptameric rings stacked back-to-back. Interacts with the co-chaperonin GroES.

The protein resides in the cytoplasm. It carries out the reaction ATP + H2O + a folded polypeptide = ADP + phosphate + an unfolded polypeptide.. Functionally, together with its co-chaperonin GroES, plays an essential role in assisting protein folding. The GroEL-GroES system forms a nano-cage that allows encapsulation of the non-native substrate proteins and provides a physical environment optimized to promote and accelerate protein folding. The polypeptide is Chaperonin GroEL 1 (Syntrophus aciditrophicus (strain SB)).